A 778-amino-acid chain; its full sequence is Degenerin deg-1 (778 aa).

Topologically, residues 1 to 82 (MSNHHSKTKK…IARNSFSKLM (82 aa)) are cytoplasmic. Residues 83-103 (WGLIIFSFLLMFAYQASKLIF) traverse the membrane as a helical segment. Topologically, residues 104 to 711 (KFSAHEKITD…LVNLIADFGG (608 aa)) are extracellular. The span at 154–165 (NAKTHSKSEGEK) shows a compositional bias: basic and acidic residues. Disordered stretches follow at residues 154-180 (NAKT…DASQ) and 201-220 (SNKT…QRSI). N-linked (GlcNAc...) asparagine glycosylation is found at N202, N209, N272, and N342. Positions 346-369 (TSTTTTTTTTPPPTTTSTTTTTTT) are enriched in low complexity. Residues 346–380 (TSTTTTTTTTPPPTTTSTTTTTTTTPPPTTTARPN) form a disordered region. Residues N473, N492, and N606 are each glycosylated (N-linked (GlcNAc...) asparagine). The helical transmembrane segment at 712-732 (HLGLWLGFSVITVMEVCVLLV) threads the bilayer. The Cytoplasmic portion of the chain corresponds to 733–778 (DMISLFFKSRHEEKLLRQSTKRKDVPEDKRQITVGSGRKSDAFVSI).

This sequence belongs to the amiloride-sensitive sodium channel (TC 1.A.6) family.

The protein localises to the membrane. Its function is as follows. Probable sodium channel subunit. Required by a subset of neurons. The protein is Degenerin deg-1 of Caenorhabditis elegans.